The primary structure comprises 309 residues: Ribonuclease Z (309 aa).

The Zn(2+) site is built by His-63, His-65, Asp-67, His-68, His-145, Asp-216, and His-274. Catalysis depends on Asp-67, which acts as the Proton acceptor.

This sequence belongs to the RNase Z family. As to quaternary structure, homodimer. Requires Zn(2+) as cofactor.

It carries out the reaction Endonucleolytic cleavage of RNA, removing extra 3' nucleotides from tRNA precursor, generating 3' termini of tRNAs. A 3'-hydroxy group is left at the tRNA terminus and a 5'-phosphoryl group is left at the trailer molecule.. Zinc phosphodiesterase, which displays some tRNA 3'-processing endonuclease activity. Probably involved in tRNA maturation, by removing a 3'-trailer from precursor tRNA. The protein is Ribonuclease Z of Streptococcus thermophilus (strain CNRZ 1066).